Reading from the N-terminus, the 342-residue chain is Holliday junction branch migration complex subunit RuvB (342 aa).

A large ATPase domain (RuvB-L) region spans residues 1 to 179; that stretch reads MTNILSPEKS…FGIPMRLNFY (179 aa). Residues I18, R19, G60, K63, T64, T65, 126–128, R169, Y179, and R216 each bind ATP; that span reads EDF. T64 contributes to the Mg(2+) binding site. The segment at 180 to 250 is small ATPAse domain (RuvB-S); the sequence is NTEELKKVLN…ISDFGLNRLE (71 aa). Residues 253 to 342 form a head domain (RuvB-H) region; sequence CIGLDSNDYR…HQFNIFNENE (90 aa). DNA is bound by residues R289, R308, and R313.

The protein belongs to the RuvB family. In terms of assembly, homohexamer. Forms an RuvA(8)-RuvB(12)-Holliday junction (HJ) complex. HJ DNA is sandwiched between 2 RuvA tetramers; dsDNA enters through RuvA and exits via RuvB. An RuvB hexamer assembles on each DNA strand where it exits the tetramer. Each RuvB hexamer is contacted by two RuvA subunits (via domain III) on 2 adjacent RuvB subunits; this complex drives branch migration. In the full resolvosome a probable DNA-RuvA(4)-RuvB(12)-RuvC(2) complex forms which resolves the HJ.

The protein localises to the cytoplasm. The enzyme catalyses ATP + H2O = ADP + phosphate + H(+). The RuvA-RuvB-RuvC complex processes Holliday junction (HJ) DNA during genetic recombination and DNA repair, while the RuvA-RuvB complex plays an important role in the rescue of blocked DNA replication forks via replication fork reversal (RFR). RuvA specifically binds to HJ cruciform DNA, conferring on it an open structure. The RuvB hexamer acts as an ATP-dependent pump, pulling dsDNA into and through the RuvAB complex. RuvB forms 2 homohexamers on either side of HJ DNA bound by 1 or 2 RuvA tetramers; 4 subunits per hexamer contact DNA at a time. Coordinated motions by a converter formed by DNA-disengaged RuvB subunits stimulates ATP hydrolysis and nucleotide exchange. Immobilization of the converter enables RuvB to convert the ATP-contained energy into a lever motion, pulling 2 nucleotides of DNA out of the RuvA tetramer per ATP hydrolyzed, thus driving DNA branch migration. The RuvB motors rotate together with the DNA substrate, which together with the progressing nucleotide cycle form the mechanistic basis for DNA recombination by continuous HJ branch migration. Branch migration allows RuvC to scan DNA until it finds its consensus sequence, where it cleaves and resolves cruciform DNA. The protein is Holliday junction branch migration complex subunit RuvB of Rickettsia africae (strain ESF-5).